A 1210-amino-acid polypeptide reads, in one-letter code: MASQLQVFSPPSVSSSAFCSAKKLKIEPSGWDVSGQSSNDKYYTHSKTLPATQGQASSSHQVANFNLPAYDQGLLLPAPAVEHIVVTAADSSGSAATATFQSSQTLTHRSNVSLLEPYQKCGLKRKSEEVESNGSVQIIEEHPPLMLQNRTVVGAAATTTTVTTKSSSSSGEGDYQLVQHEILCSMTNSYEVLEFLGRGTFGQVAKCWKRSTKEIVAIKILKNHPSYARQGQIEVSILSRLSSENADEYNFVRSYECFQHKNHTCLVFEMLEQNLYDFLKQNKFSPLPLKYIRPILQQVATALMKLKSLGLIHADLKPENIMLVDPVRQPYRVKVIDFGSASHVSKAVCSTYLQSRYYRAPEIILGLPFCEAIDMWSLGCVIAELFLGWPLYPGASEYDQIRYISQTQGLPAEYLLSAGTKTTRFFNRDPNLGYPLWRLKTPEEHELETGIKSKEARKYIFNCLDDMAQVNMSTDLEGTDMLAEKADRREYIDLLKKMLTIDADKRITPLKTLNHQFVTMSHLLDFPHSSHVKSCFQNMEICKRRVHMYDTVSQIKSPFTTHVAPNTSTNLTMSFSNQLNTVHNQASVLASSSTAAAATLSLANSDVSLLNYQSALYPSSAAPVPGVAQQGVSLQPGTTQICTQTDPFQQTFIVCPPAFQTGLQATTKHSGFPVRMDNAVPIVPQAPAAQPLQIQSGVLTQGSCTPLMVATLHPQVATITPQYAVPFTLSCAAGRPALVEQTAAVLQAWPGGTQQILLPSAWQQLPGVALHNSVQPAAVIPEAMGSSQQLADWRNAHSHGNQYSTIMQQPSLLTNHVTLATAQPLNVGVAHVVRQQQSSSLPSKKNKQSAPVSSKSSLEVLPSQVYSLVGSSPLRTTSSYNSLVPVQDQHQPIIIPDTPSPPVSVITIRSDTDEEEDNKYKPNSSSLKARSNVISYVTVNDSPDSDSSLSSPHPTDTLSALRGNSGTLLEGPGRPAADGIGTRTIIVPPLKTQLGDCTVATQASGLLSSKTKPVASVSGQSSGCCITPTGYRAQRGGASAVQPLNLSQNQQSSSASTSQERSSNPAPRRQQAFVAPLSQAPYAFQHGSPLHSTGHPHLAPAPAHLPSQPHLYTYAAPTSAAALGSTSSIAHLFSPQGSSRHAAAYTTHPSTLVHQVPVSVGPSLLTSASVAPAQYQHQFATQSYIGSSRGSTIYTGYPLSPTKISQYSYL.

A Glycyl lysine isopeptide (Lys-Gly) (interchain with G-Cter in SUMO); alternate cross-link involves residue lysine 25. Residue lysine 25 forms a Glycyl lysine isopeptide (Lys-Gly) (interchain with G-Cter in SUMO2); alternate linkage. Glycyl lysine isopeptide (Lys-Gly) (interchain with G-Cter in SUMO2) cross-links involve residues lysine 120 and lysine 124. Residues 190-518 (YEVLEFLGRG…PLKTLNHQFV (329 aa)) form the Protein kinase domain. ATP is bound by residues 196-204 (LGRGTFGQV) and lysine 219. Catalysis depends on aspartate 315, which acts as the Proton acceptor. The interval 835 to 856 (QQQSSSLPSKKNKQSAPVSSKS) is disordered. A Nuclear localization signal 1 (NLS1) motif is present at residues 844 to 847 (KKNK). Residue serine 872 is modified to Phosphoserine. The interval 885 to 1093 (PVQDQHQPII…FQHGSPLHST (209 aa)) is interaction with TP53. The interval 891-998 (QPIIIPDTPS…PLKTQLGDCT (108 aa)) is required for localization to nuclear speckles. Residues 902–926 (PVSVITIRSDTDEEEDNKYKPNSSS) are SUMO interaction motifs (SIM); required for nuclear localization and kinase activity. The disordered stretch occupies residues 938-981 (TVNDSPDSDSSLSSPHPTDTLSALRGNSGTLLEGPGRPAADGIG). The segment covering 941–959 (DSPDSDSSLSSPHPTDTLS) has biased composition (low complexity). Lysine 991 is covalently cross-linked (Glycyl lysine isopeptide (Lys-Gly) (interchain with G-Cter in SUMO2)). 2 disordered regions span residues 1046–1069 (LSQNQQSSSASTSQERSSNPAPRR) and 1084–1104 (FQHGSPLHSTGHPHLAPAPAH). Low complexity-rich tracts occupy residues 1047–1063 (SQNQQSSSASTSQERSS) and 1095–1104 (HPHLAPAPAH). Serine 1200 is modified (phosphoserine). Lysine 1203 participates in a covalent cross-link: Glycyl lysine isopeptide (Lys-Gly) (interchain with G-Cter in SUMO).

This sequence belongs to the protein kinase superfamily. CMGC Ser/Thr protein kinase family. HIPK subfamily. Interacts with Nkx1-2, Nkx2-5, MYB, PARK7, DAXX and p53/TP53. Part of a cytoplasmic complex made of HIPK1, DAB2IP and MAP3K5 in response to TNF. This complex formation promotes MAP3K5-JNK activation and subsequent apoptosis. Phosphorylated and activated by JNK1. Autophosphorylated. Post-translationally, sumoylated. When conjugated it is directed to nuclear speckles. SENP1-mediated desumoylation is mediated by TNF in response to stress stimuli, triggering transient translocation from nucleus to cytoplasm. In terms of tissue distribution, ubiquitously expressed, with high levels in reproductive tissues. Expressed in the epithelial layer of mammary gland, uterus and epididymis, in the corpus luteum, and in post-meiotic round spermatids.

It is found in the nucleus. It localises to the cytoplasm. The protein resides in the nucleus speckle. The enzyme catalyses L-seryl-[protein] + ATP = O-phospho-L-seryl-[protein] + ADP + H(+). It carries out the reaction L-threonyl-[protein] + ATP = O-phospho-L-threonyl-[protein] + ADP + H(+). Serine/threonine-protein kinase involved in transcription regulation and TNF-mediated cellular apoptosis. Plays a role as a corepressor for homeodomain transcription factors. Phosphorylates DAXX and MYB. Phosphorylates DAXX in response to stress, and mediates its translocation from the nucleus to the cytoplasm. Inactivates MYB transcription factor activity by phosphorylation. Prevents MAP3K5-JNK activation in the absence of TNF. TNF triggers its translocation to the cytoplasm in response to stress stimuli, thus activating nuclear MAP3K5-JNK by derepression and promoting apoptosis. May be involved in anti-oxidative stress responses. Involved in the regulation of eye size, lens formation and retinal lamination during late embryogenesis. Promotes angiogenesis and to be involved in erythroid differentiation. May be involved in malignant squamous cell tumor formation. Phosphorylates PAGE4 at 'Thr-51' which is critical for the ability of PAGE4 to potentiate the transcriptional activator activity of JUN. In Mus musculus (Mouse), this protein is Homeodomain-interacting protein kinase 1 (Hipk1).